The following is a 335-amino-acid chain: UPF0353 protein BCG_1543 (335 aa).

2 helical membrane passes run 18–38 (WFFL…LMQL) and 67–87 (VPAI…AGPT). Residues 98 to 294 (VVMLVIDVSQ…AELRAVYSSL (197 aa)) enclose the VWFA domain. The helical transmembrane segment at 309-329 (VGWLRLGALALALAALAALLI) threads the bilayer.

Belongs to the UPF0353 family.

The protein resides in the cell membrane. This is UPF0353 protein BCG_1543 from Mycobacterium bovis (strain BCG / Pasteur 1173P2).